A 67-amino-acid chain; its full sequence is Potassium channel toxin alpha-KTx 6.16 (67 aa).

An N-terminal signal peptide occupies residues 1–24; that stretch reads MNLKLALVLLLTVINVGMLPGATS. Intrachain disulfides connect Cys34–Cys55, Cys40–Cys60, Cys44–Cys62, and Cys50–Cys65.

This sequence belongs to the short scorpion toxin superfamily. Potassium channel inhibitor family. Alpha-KTx 06 subfamily. In terms of tissue distribution, expressed by the venom gland.

The protein resides in the secreted. Inhibits voltage-gated potassium channels. This Opisthacanthus cayaporum (South American scorpion) protein is Potassium channel toxin alpha-KTx 6.16.